We begin with the raw amino-acid sequence, 211 residues long: Guanylate kinase (211 aa).

The Guanylate kinase-like domain maps to 7–187 (GLLIILSGPS…AADRIIAIIR (181 aa)). 14–21 (GPSGVGKA) contributes to the ATP binding site.

The protein belongs to the guanylate kinase family.

Its subcellular location is the cytoplasm. It catalyses the reaction GMP + ATP = GDP + ADP. Its function is as follows. Essential for recycling GMP and indirectly, cGMP. In Aster yellows witches'-broom phytoplasma (strain AYWB), this protein is Guanylate kinase.